The following is a 387-amino-acid chain: 3-ketoacyl-CoA thiolase (387 aa).

Residue C91 is the Acyl-thioester intermediate of the active site. Active-site proton acceptor residues include H343 and C373.

Belongs to the thiolase-like superfamily. Thiolase family. As to quaternary structure, heterotetramer of two alpha chains (FadB) and two beta chains (FadA).

The protein localises to the cytoplasm. It catalyses the reaction an acyl-CoA + acetyl-CoA = a 3-oxoacyl-CoA + CoA. Its pathway is lipid metabolism; fatty acid beta-oxidation. Functionally, catalyzes the final step of fatty acid oxidation in which acetyl-CoA is released and the CoA ester of a fatty acid two carbons shorter is formed. In Aliivibrio fischeri (strain ATCC 700601 / ES114) (Vibrio fischeri), this protein is 3-ketoacyl-CoA thiolase.